The sequence spans 165 residues: Probable deoxyuridine 5'-triphosphate nucleotidohydrolase (165 aa).

Positions 39–49 (GRIDTDGKTIG) are enriched in basic and acidic residues. A disordered region spans residues 39–64 (GRIDTDGKTIGDRSPVTPTADEDSTD).

This sequence belongs to the dCTP deaminase family. Archaeal dUTPase subfamily.

The enzyme catalyses dUTP + H2O = dUMP + diphosphate + H(+). It functions in the pathway pyrimidine metabolism; dUMP biosynthesis; dUMP from dCTP (dUTP route): step 2/2. This enzyme is involved in nucleotide metabolism: it produces dUMP, the immediate precursor of thymidine nucleotides and it decreases the intracellular concentration of dUTP so that uracil cannot be incorporated into DNA. In Halobacterium salinarum (strain ATCC 29341 / DSM 671 / R1), this protein is Probable deoxyuridine 5'-triphosphate nucleotidohydrolase.